Consider the following 657-residue polypeptide: Transketolase (657 aa).

Substrate is bound at residue His31. Residues His71 and 120–122 (GPL) each bind thiamine diphosphate. Mg(2+) is bound at residue Asp158. Positions 159 and 188 each coordinate thiamine diphosphate. Mg(2+)-binding residues include Asn188 and Ile190. Positions 262, 354, and 381 each coordinate substrate. His262 lines the thiamine diphosphate pocket. Residue Glu408 is the Proton donor of the active site. A thiamine diphosphate-binding site is contributed by Phe434. Substrate contacts are provided by His458, Asp466, and Arg517.

This sequence belongs to the transketolase family. Homodimer. Mg(2+) serves as cofactor. It depends on Ca(2+) as a cofactor. The cofactor is Mn(2+). Co(2+) is required as a cofactor. Requires thiamine diphosphate as cofactor.

It catalyses the reaction D-sedoheptulose 7-phosphate + D-glyceraldehyde 3-phosphate = aldehydo-D-ribose 5-phosphate + D-xylulose 5-phosphate. It participates in carbohydrate biosynthesis; Calvin cycle. The protein operates within carbohydrate degradation; pentose phosphate pathway. Catalyzes the transfer of a two-carbon ketol group from a ketose donor to an aldose acceptor, via a covalent intermediate with the cofactor thiamine pyrophosphate. In Cereibacter sphaeroides (Rhodobacter sphaeroides), this protein is Transketolase (tklB).